The following is a 180-amino-acid chain: uncharacterized protein (180 aa).

This is an uncharacterized protein from Homo sapiens (Human).